The sequence spans 479 residues: Monodehydroascorbate reductase 1, peroxisomal (479 aa).

The Cytoplasmic segment spans residues 1–3 (MGR). The chain crosses the membrane as a helical span at residues 4-24 (AFEYVILGGGVAAGYAALEFV). Residues 12 to 15 (GGVA), Glu-41, Arg-48, Lys-53, and 147 to 148 (RN) each bind FAD. Topologically, residues 25 to 445 (RRNGGASSQE…QATGGGGKPT (421 aa)) are peroxisomal. NAD(+)-binding positions include 172-178 (GGYIGME), Arg-202, and Gly-260. NADP(+) is bound by residues 174–178 (YIGME), Arg-202, and Gly-260. Asp-297 is an FAD binding site. Residue 314–315 (EH) coordinates NAD(+). Residue 314 to 315 (EH) participates in NADP(+) binding. Residue Val-316 participates in FAD binding. Arg-320 is a binding site for L-ascorbate. Tyr-347 serves as a coordination point for FAD. Tyr-347 contributes to the NAD(+) binding site. Residue Tyr-347 participates in NADP(+) binding. Arg-349 is a binding site for L-ascorbate. The chain crosses the membrane as a helical span at residues 446-466 (CAWHATVGVAAAVSIAAFACW). The Cytoplasmic segment spans residues 467 to 479 (YGWQAPYVLKRDF).

The protein belongs to the FAD-dependent oxidoreductase family. The cofactor is FAD.

The protein localises to the peroxisome membrane. The enzyme catalyses 2 monodehydro-L-ascorbate radical + NADH + H(+) = 2 L-ascorbate + NAD(+). Its function is as follows. Catalyzes the conversion of monodehydroascorbate to ascorbate, oxidizing NADH in the process. Ascorbate is a major antioxidant against reactive oxygen species (ROS) and nitric oxide (NO). The chain is Monodehydroascorbate reductase 1, peroxisomal from Oryza sativa subsp. japonica (Rice).